Consider the following 212-residue polypeptide: Deoxyribose-phosphate aldolase (212 aa).

The Proton donor/acceptor role is filled by aspartate 89. Residue lysine 151 is the Schiff-base intermediate with acetaldehyde of the active site. The active-site Proton donor/acceptor is the lysine 180.

Belongs to the DeoC/FbaB aldolase family. DeoC type 1 subfamily.

The protein resides in the cytoplasm. It catalyses the reaction 2-deoxy-D-ribose 5-phosphate = D-glyceraldehyde 3-phosphate + acetaldehyde. Its pathway is carbohydrate degradation; 2-deoxy-D-ribose 1-phosphate degradation; D-glyceraldehyde 3-phosphate and acetaldehyde from 2-deoxy-alpha-D-ribose 1-phosphate: step 2/2. Catalyzes a reversible aldol reaction between acetaldehyde and D-glyceraldehyde 3-phosphate to generate 2-deoxy-D-ribose 5-phosphate. This chain is Deoxyribose-phosphate aldolase, found in Clostridium botulinum (strain Kyoto / Type A2).